The primary structure comprises 240 residues: Citrate synthase-lysine N-methyltransferase CSKMT, mitochondrial (240 aa).

The N-terminal 21 residues, 1–21, are a transit peptide targeting the mitochondrion; that stretch reads MAALRRMLHLPRLTMGTCRPF.

Belongs to the methyltransferase superfamily.

It localises to the mitochondrion. It carries out the reaction L-lysyl-[citrate synthase] + S-adenosyl-L-methionine = N(6)-methyl-L-lysyl-[citrate synthase] + S-adenosyl-L-homocysteine + H(+). The catalysed reaction is N(6)-methyl-L-lysyl-[citrate synthase] + S-adenosyl-L-methionine = N(6),N(6)-dimethyl-L-lysyl-[citrate synthase] + S-adenosyl-L-homocysteine + H(+). It catalyses the reaction N(6),N(6)-dimethyl-L-lysyl-[citrate synthase] + S-adenosyl-L-methionine = N(6),N(6),N(6)-trimethyl-L-lysyl-[citrate synthase] + S-adenosyl-L-homocysteine + H(+). With respect to regulation, citrate synthase-lysine methyltransferase activity is inhibited by S-adenosylhomocysteine (AdoHcy) and oxaloacetate (OAA). Protein-lysine methyltransferase that selectively trimethylates citrate synthase (CS) in mitochondria. Seems to conduct trimethylation in a highly distributive manner rather than in a processive manner, and thus introduces a single methyl group per binding event. The protein is Citrate synthase-lysine N-methyltransferase CSKMT, mitochondrial of Pongo abelii (Sumatran orangutan).